The primary structure comprises 394 residues: Elongation factor Tu 2 (394 aa).

The tr-type G domain maps to 10–204; sequence KPHVNVGTIG…ALDTYIPEPA (195 aa). The interval 19 to 26 is G1; it reads GHVDHGKT. 19-26 contributes to the GTP binding site; it reads GHVDHGKT. Mg(2+) is bound at residue Thr-26. Positions 60–64 are G2; it reads GITIN. The G3 stretch occupies residues 81 to 84; it reads DCPG. Residues 81–85 and 136–139 each bind GTP; these read DCPGH and NKCD. Residues 136–139 are G4; sequence NKCD. The G5 stretch occupies residues 174–176; it reads SAL.

This sequence belongs to the TRAFAC class translation factor GTPase superfamily. Classic translation factor GTPase family. EF-Tu/EF-1A subfamily. In terms of assembly, monomer.

The protein localises to the cytoplasm. It carries out the reaction GTP + H2O = GDP + phosphate + H(+). Functionally, GTP hydrolase that promotes the GTP-dependent binding of aminoacyl-tRNA to the A-site of ribosomes during protein biosynthesis. This is Elongation factor Tu 2 from Shewanella frigidimarina (strain NCIMB 400).